We begin with the raw amino-acid sequence, 444 residues long: Glutamate--tRNA ligase 2 (444 aa).

The 'HIGH' region signature appears at 8–18; it reads PSPTGHLHAGN. The short motif at 241-245 is the 'KMSKS' region element; the sequence is KLSKR. K244 provides a ligand contact to ATP.

It belongs to the class-I aminoacyl-tRNA synthetase family. Glutamate--tRNA ligase type 1 subfamily. As to quaternary structure, monomer.

It is found in the cytoplasm. It carries out the reaction tRNA(Glu) + L-glutamate + ATP = L-glutamyl-tRNA(Glu) + AMP + diphosphate. Catalyzes the attachment of glutamate to tRNA(Glu) in a two-step reaction: glutamate is first activated by ATP to form Glu-AMP and then transferred to the acceptor end of tRNA(Glu). The polypeptide is Glutamate--tRNA ligase 2 (Acidiphilium cryptum (strain JF-5)).